The sequence spans 123 residues: Small ribosomal subunit protein uS12c (123 aa).

The tract at residues 9–31 (RNKRQAAENKTKSPALQRSPQRR) is disordered.

Belongs to the universal ribosomal protein uS12 family. Part of the 30S ribosomal subunit.

The protein localises to the plastid. The protein resides in the chloroplast. Its function is as follows. With S4 and S5 plays an important role in translational accuracy. Located at the interface of the 30S and 50S subunits. This Spirogyra maxima (Green alga) protein is Small ribosomal subunit protein uS12c (rps12).